Consider the following 263-residue polypeptide: Acyl-[acyl-carrier-protein]--UDP-N-acetylglucosamine O-acyltransferase (263 aa).

It belongs to the transferase hexapeptide repeat family. LpxA subfamily. As to quaternary structure, homotrimer.

The protein resides in the cytoplasm. It catalyses the reaction a (3R)-hydroxyacyl-[ACP] + UDP-N-acetyl-alpha-D-glucosamine = a UDP-3-O-[(3R)-3-hydroxyacyl]-N-acetyl-alpha-D-glucosamine + holo-[ACP]. Its pathway is glycolipid biosynthesis; lipid IV(A) biosynthesis; lipid IV(A) from (3R)-3-hydroxytetradecanoyl-[acyl-carrier-protein] and UDP-N-acetyl-alpha-D-glucosamine: step 1/6. Its function is as follows. Involved in the biosynthesis of lipid A, a phosphorylated glycolipid that anchors the lipopolysaccharide to the outer membrane of the cell. This is Acyl-[acyl-carrier-protein]--UDP-N-acetylglucosamine O-acyltransferase from Xanthomonas axonopodis pv. citri (strain 306).